The chain runs to 447 residues: Asparagine--tRNA ligase (447 aa).

The protein belongs to the class-II aminoacyl-tRNA synthetase family. In terms of assembly, homodimer.

It localises to the cytoplasm. The catalysed reaction is tRNA(Asn) + L-asparagine + ATP = L-asparaginyl-tRNA(Asn) + AMP + diphosphate + H(+). The polypeptide is Asparagine--tRNA ligase (Lactococcus lactis subsp. lactis (strain IL1403) (Streptococcus lactis)).